Reading from the N-terminus, the 1381-residue chain is MKAPAVLVPGILVLLFTLVQRSNGECKEALAKSEMNVNMKYQLPNFTAETAIQNVILHEHHIFLGATNYIYVLNEEDLQKVAEYKTGPVLEHPDCFPCQDCSSKANLSGGVWKDNINMALVVDTYYDDQLISCGSVNRGTCQRHVFPHNHTADIQSEVHCIFSPQIEEPSQCPDCVVSALGAKVLSSVKDRFINFFVGNTINSSYFPHHPLHSISVRRLKETKDGFMFLTDQSYIDVLPEFRDSYPIKYIHAFESNNFIYFLTVQRETLNAQTFHTRIIRFCSLNSGLHSYMEMPLECILTEKRKKRSTKKEVFNILQAAYVSKPGAQLARQIGASLNDDILFGVFAQSKPDSAEPMDRSAMCAFPIKYVNDFFNKIVNKNNVRCLQHFYGPNHEHCFNRTLLRNSSGCEARRDEYRAEFTTALQRVDLFMGQFSEVLLTSISTFVKGDLTIANLGTSEGRFMQVVVSRSGPSTPHVNFLLDSHPVSPEVIVEHPLNQNGYTLVVTGKKITKIPLNGLGCRHFQSCSQCLSAPPFVQCGWCHDKCVRSEECPSGTWTQQICLPAIYKVFPTSAPLEGGTRLTICGWDFGFRRNNKFDLKKTRVLLGNESCTLTLSESTMNILKCTVGPAMNKHFNMSIIISNGHGTTQYSTFSYVDPIITSISPKYGPMAGGTLLTLTGNYLNSGNSRHISIGGKTCTLKSVSNSILECYTPAQTISTEFAVKLKIDLANRETSIFSYREDPIVYEIHPTKSFISGGSTITGVGKNLHSVSVPRMVINVHEAGRNFTVACQHRSNSEIICCTTPSLQQLNLQLPLKTKAFFMLDGILSKYFDLIYVHNPVFKPFEKPVMISMGNENVLEIKGNDIDPEAVKGEVLKVGNKSCENIHLHSEAVLCTVPNDLLKLNSELNIEWKQAISSTVLGKVIVQPDQNFTGLIAGVVSISIALLLLLGLFLWLKKRKQIKDLGSELVRYDARVHTPHLDRLVSARSVSPTTEMVSNESVDYRATFPEDQFPNSSQNGSCRQVQYPLTDMSPILTSGDSDISSPLLQNTVHIDLSALNPELVQAVQHVVIGPSSLIVHFNEVIGRGHFGCVYHGTLLDNDGKKIHCAVKSLNRITDIGEVSQFLTEGIIMKDFSHPNVLSLLGICLRSEGSPLVVLPYMKHGDLRNFIRNETHNPTVKDLIGFGLQVAKGMKYLASKKFVHRDLAARNCMLDEKFTVKVADFGLARDMYDKEYYSVHNKTGAKLPVKWMALESLQTQKFTTKSDVWSFGVLLWELMTRGAPPYPDVNTFDITVYLLQGRRLLQPEYCPDPLYEVMLKCWHPKAEMRPSFSELVSRISAIFSTFIGEHYVHVNATYVNVKCVAPYPSLLSSEDNADDEVDT.

An N-terminal signal peptide occupies residues 1-24 (MKAPAVLVPGILVLLFTLVQRSNG). The Extracellular portion of the chain corresponds to 25 to 932 (ECKEALAKSE…VIVQPDQNFT (908 aa)). A Sema domain is found at 27 to 515 (KEALAKSEMN…TGKKITKIPL (489 aa)). N-linked (GlcNAc...) asparagine glycosylation occurs at asparagine 45. Intrachain disulfides connect cysteine 95–cysteine 101, cysteine 98–cysteine 160, cysteine 133–cysteine 141, and cysteine 172–cysteine 175. The N-linked (GlcNAc...) asparagine glycan is linked to asparagine 106. N-linked (GlcNAc...) asparagine glycosylation occurs at asparagine 149. Asparagine 202 is a glycosylation site (N-linked (GlcNAc...) asparagine). Intrachain disulfides connect cysteine 298-cysteine 363 and cysteine 385-cysteine 397. N-linked (GlcNAc...) asparagine glycans are attached at residues asparagine 399 and asparagine 405. Intrachain disulfides connect cysteine 520–cysteine 538, cysteine 526–cysteine 561, cysteine 529–cysteine 545, and cysteine 541–cysteine 551. 3 IPT/TIG domains span residues 563–655 (PAIY…FSYV), 657–739 (PIIT…FSYR), and 742–836 (PIVY…LIYV). The O-linked (Man) threonine glycan is linked to threonine 582. Asparagine 607 and asparagine 635 each carry an N-linked (GlcNAc...) asparagine glycan. O-linked (Man) threonine glycosylation is found at threonine 676 and threonine 761. 3 N-linked (GlcNAc...) asparagine glycosylation sites follow: asparagine 785, asparagine 879, and asparagine 930. The helical transmembrane segment at 933 to 955 (GLIAGVVSISIALLLLLGLFLWL) threads the bilayer. Residues 956–1381 (KKRKQIKDLG…EDNADDEVDT (426 aa)) are Cytoplasmic-facing. The residue at position 966 (serine 966) is a Phosphoserine. A Phosphothreonine modification is found at threonine 977. Phosphoserine occurs at positions 990, 997, and 1000. Position 1003 is a phosphotyrosine (tyrosine 1003). A Protein kinase domain is found at 1078-1345 (VHFNEVIGRG…RISAIFSTFI (268 aa)). ATP contacts are provided by residues 1084 to 1092 (IGRGHFGCV) and lysine 1110. The Proton acceptor role is filled by aspartate 1204. The interval 1212-1381 (LDEKFTVKVA…EDNADDEVDT (170 aa)) is interaction with RANBP9. Tyrosine 1230 is modified (phosphotyrosine). Phosphotyrosine; by autocatalysis occurs at positions 1234 and 1235. Position 1289 is a phosphothreonine (threonine 1289). The interval 1320-1359 (WHPKAEMRPSFSELVSRISAIFSTFIGEHYVHVNATYVNV) is interaction with MUC20. Residues tyrosine 1349 and tyrosine 1356 each carry the phosphotyrosine; by autocatalysis modification. Tyrosine 1365 is modified (phosphotyrosine).

The protein belongs to the protein kinase superfamily. Tyr protein kinase family. In terms of assembly, heterodimer made of an alpha chain (50 kDa) and a beta chain (145 kDa) which are disulfide linked. Binds PLXNB1. Interacts when phosphorylated with downstream effectors including STAT3, PIK3R1, SRC, PCLG1, GRB2 and GAB1. Interacts with SPSB1, SPSB2 and SPSB4. Interacts with INPP5D/SHIP1. When phosphorylated at Tyr-1356, interacts with INPPL1/SHIP2. Interacts with RANBP9 and RANBP10, as well as SPSB1, SPSB2, SPSB3 and SPSB4. SPSB1 binding occurs in the presence and in the absence of HGF, however HGF treatment has a positive effect on this interaction. Interacts with MUC20; prevents interaction with GRB2 and suppresses hepatocyte growth factor-induced cell proliferation. Interacts with GRB10. Interacts with PTPN1 and PTPN2. Interacts with HSP90AA1 and HSP90AB1; the interaction suppresses MET kinase activity. Interacts with tensin TNS3. Interacts (when phosphorylated) with tensin TNS4 (via SH2 domain); the interaction increases MET protein stability by inhibiting MET endocytosis and subsequent lysosomal degradation. In terms of processing, autophosphorylated in response to ligand binding on Tyr-1234 and Tyr-1235 in the kinase domain leading to further phosphorylation of Tyr-1349 and Tyr-1356 in the C-terminal multifunctional docking site. Dephosphorylated by PTPRJ at Tyr-1349 and Tyr-1365. Dephosphorylated by PTPN1 and PTPN2. Post-translationally, ubiquitinated. Ubiquitination by CBL regulates the receptor stability and activity through proteasomal degradation. O-mannosylation of IPT/TIG domains by TMEM260 is required for protein maturation. O-mannosylated residues are composed of single mannose glycans that are not elongated or modified.

It localises to the membrane. The catalysed reaction is L-tyrosyl-[protein] + ATP = O-phospho-L-tyrosyl-[protein] + ADP + H(+). Its activity is regulated as follows. In its inactive state, the C-terminal tail interacts with the catalytic domain and inhibits the kinase activity. Upon ligand binding, the C-terminal tail is displaced and becomes phosphorylated, thus increasing the kinase activity. Receptor tyrosine kinase that transduces signals from the extracellular matrix into the cytoplasm by binding to hepatocyte growth factor/HGF ligand. Regulates many physiological processes including proliferation, scattering, morphogenesis and survival. Ligand binding at the cell surface induces autophosphorylation of MET on its intracellular domain that provides docking sites for downstream signaling molecules. Following activation by ligand, interacts with the PI3-kinase subunit PIK3R1, PLCG1, SRC, GRB2, STAT3 or the adapter GAB1. Recruitment of these downstream effectors by MET leads to the activation of several signaling cascades including the RAS-ERK, PI3 kinase-AKT, or PLCgamma-PKC. The RAS-ERK activation is associated with the morphogenetic effects while PI3K/AKT coordinates prosurvival effects. During embryonic development, MET signaling plays a role in gastrulation, development and migration of muscles and neuronal precursors, angiogenesis and kidney formation. In adults, participates in wound healing as well as organ regeneration and tissue remodeling. Also promotes differentiation and proliferation of hematopoietic cells. The sequence is that of Hepatocyte growth factor receptor (MET) from Papio anubis (Olive baboon).